The following is a 313-amino-acid chain: Acetyl-coenzyme A carboxylase carboxyl transferase subunit beta, chloroplastic (313 aa).

One can recognise a CoA carboxyltransferase N-terminal domain in the interval 47-313 (LWTRCDNCEN…SAPCRRSNNS (267 aa)). 4 residues coordinate Zn(2+): Cys-51, Cys-54, Cys-70, and Cys-73. Residues 51-73 (CDNCENMLYIRFLRQNKRICEEC) form a C4-type zinc finger.

Belongs to the AccD/PCCB family. As to quaternary structure, acetyl-CoA carboxylase is a heterohexamer composed of biotin carboxyl carrier protein, biotin carboxylase and 2 subunits each of ACCase subunit alpha and ACCase plastid-coded subunit beta (accD). Zn(2+) serves as cofactor.

It localises to the plastid. The protein localises to the chloroplast stroma. The catalysed reaction is N(6)-carboxybiotinyl-L-lysyl-[protein] + acetyl-CoA = N(6)-biotinyl-L-lysyl-[protein] + malonyl-CoA. It functions in the pathway lipid metabolism; malonyl-CoA biosynthesis; malonyl-CoA from acetyl-CoA: step 1/1. In terms of biological role, component of the acetyl coenzyme A carboxylase (ACC) complex. Biotin carboxylase (BC) catalyzes the carboxylation of biotin on its carrier protein (BCCP) and then the CO(2) group is transferred by the transcarboxylase to acetyl-CoA to form malonyl-CoA. The sequence is that of Acetyl-coenzyme A carboxylase carboxyl transferase subunit beta, chloroplastic from Anthoceros angustus (Hornwort).